Consider the following 148-residue polypeptide: MTLHKDRRIGRLSVLLLLHETEENQQISRLERDGWKVCLGRVGSMDAHKVVAAIETASKKSGVIQSEGYRESHALYHATMEALHGVTRGEMLLGSLLRTVGLKFAVLRGNPYESEAEGDWIAVSLYGTIGAPIKGLEHETFGVGINHI.

This sequence belongs to the HutP family. As to quaternary structure, homohexamer.

In terms of biological role, antiterminator that binds to cis-acting regulatory sequences on the mRNA in the presence of histidine, thereby suppressing transcription termination and activating the hut operon for histidine utilization. This chain is Hut operon positive regulatory protein, found in Bacillus velezensis (strain DSM 23117 / BGSC 10A6 / LMG 26770 / FZB42) (Bacillus amyloliquefaciens subsp. plantarum).